The chain runs to 88 residues: Small ribosomal subunit protein bS20 (88 aa).

The protein belongs to the bacterial ribosomal protein bS20 family.

Functionally, binds directly to 16S ribosomal RNA. This chain is Small ribosomal subunit protein bS20, found in Clostridium kluyveri (strain NBRC 12016).